Here is a 92-residue protein sequence, read N- to C-terminus: MTINLKVKQEKRKGLSINDIQDGYFILRNDDVWIVKMDVTNRNKIHLIDLETFHVKTVSTKNDLKSLFEDWSRIKILSPKQVNLNIGFQWKE.

This Bacillus subtilis (strain 168) protein is SPbeta prophage-derived uncharacterized protein YopY (yopY).